Consider the following 213-residue polypeptide: Thiamine-phosphate synthase (213 aa).

Residues 42 to 46 (QYREK) and aspartate 77 contribute to the 4-amino-2-methyl-5-(diphosphooxymethyl)pyrimidine site. The Mg(2+) site is built by aspartate 78 and aspartate 97. Serine 116 contacts 4-amino-2-methyl-5-(diphosphooxymethyl)pyrimidine. Residue 142–144 (TIS) coordinates 2-[(2R,5Z)-2-carboxy-4-methylthiazol-5(2H)-ylidene]ethyl phosphate. Lysine 145 is a binding site for 4-amino-2-methyl-5-(diphosphooxymethyl)pyrimidine. 2-[(2R,5Z)-2-carboxy-4-methylthiazol-5(2H)-ylidene]ethyl phosphate-binding positions include glycine 173 and 193–194 (IS).

The protein belongs to the thiamine-phosphate synthase family. Mg(2+) is required as a cofactor.

It carries out the reaction 2-[(2R,5Z)-2-carboxy-4-methylthiazol-5(2H)-ylidene]ethyl phosphate + 4-amino-2-methyl-5-(diphosphooxymethyl)pyrimidine + 2 H(+) = thiamine phosphate + CO2 + diphosphate. The enzyme catalyses 2-(2-carboxy-4-methylthiazol-5-yl)ethyl phosphate + 4-amino-2-methyl-5-(diphosphooxymethyl)pyrimidine + 2 H(+) = thiamine phosphate + CO2 + diphosphate. It catalyses the reaction 4-methyl-5-(2-phosphooxyethyl)-thiazole + 4-amino-2-methyl-5-(diphosphooxymethyl)pyrimidine + H(+) = thiamine phosphate + diphosphate. Its pathway is cofactor biosynthesis; thiamine diphosphate biosynthesis; thiamine phosphate from 4-amino-2-methyl-5-diphosphomethylpyrimidine and 4-methyl-5-(2-phosphoethyl)-thiazole: step 1/1. In terms of biological role, condenses 4-methyl-5-(beta-hydroxyethyl)thiazole monophosphate (THZ-P) and 2-methyl-4-amino-5-hydroxymethyl pyrimidine pyrophosphate (HMP-PP) to form thiamine monophosphate (TMP). The sequence is that of Thiamine-phosphate synthase from Limosilactobacillus fermentum (strain NBRC 3956 / LMG 18251) (Lactobacillus fermentum).